We begin with the raw amino-acid sequence, 328 residues long: Malate dehydrogenase (328 aa).

NAD(+) is bound at residue 12 to 18 (GAAGQIG). Residues Arg-95 and Arg-101 each coordinate substrate. NAD(+) contacts are provided by residues Asn-108, Gln-115, and 132–134 (VGN). Positions 134 and 165 each coordinate substrate. The active-site Proton acceptor is the His-190.

This sequence belongs to the LDH/MDH superfamily. MDH type 2 family.

The catalysed reaction is (S)-malate + NAD(+) = oxaloacetate + NADH + H(+). Its function is as follows. Catalyzes the reversible oxidation of malate to oxaloacetate. In Delftia acidovorans (strain DSM 14801 / SPH-1), this protein is Malate dehydrogenase.